The sequence spans 544 residues: Methionine--tRNA ligase (544 aa).

The short motif at proline 10 to histidine 20 is the 'HIGH' region element. Cysteine 141, cysteine 144, cysteine 153, and cysteine 156 together coordinate Zn(2+). The 'KMSKS' region signature appears at lysine 329–serine 333. Threonine 332 lines the ATP pocket.

It belongs to the class-I aminoacyl-tRNA synthetase family. MetG type 1 subfamily. As to quaternary structure, monomer. The cofactor is Zn(2+).

It is found in the cytoplasm. It catalyses the reaction tRNA(Met) + L-methionine + ATP = L-methionyl-tRNA(Met) + AMP + diphosphate. Its function is as follows. Is required not only for elongation of protein synthesis but also for the initiation of all mRNA translation through initiator tRNA(fMet) aminoacylation. In Bacillus cereus (strain Q1), this protein is Methionine--tRNA ligase.